The sequence spans 108 residues: Large ribosomal subunit protein bL21 (108 aa).

The protein belongs to the bacterial ribosomal protein bL21 family. As to quaternary structure, part of the 50S ribosomal subunit. Contacts protein L20.

In terms of biological role, this protein binds to 23S rRNA in the presence of protein L20. This Orientia tsutsugamushi (strain Ikeda) (Rickettsia tsutsugamushi) protein is Large ribosomal subunit protein bL21.